We begin with the raw amino-acid sequence, 264 residues long: Tryptophan synthase alpha chain (264 aa).

Active-site proton acceptor residues include glutamate 49 and aspartate 60.

Belongs to the TrpA family. As to quaternary structure, tetramer of two alpha and two beta chains.

The catalysed reaction is (1S,2R)-1-C-(indol-3-yl)glycerol 3-phosphate + L-serine = D-glyceraldehyde 3-phosphate + L-tryptophan + H2O. It functions in the pathway amino-acid biosynthesis; L-tryptophan biosynthesis; L-tryptophan from chorismate: step 5/5. In terms of biological role, the alpha subunit is responsible for the aldol cleavage of indoleglycerol phosphate to indole and glyceraldehyde 3-phosphate. In Microcystis aeruginosa (strain NIES-843 / IAM M-2473), this protein is Tryptophan synthase alpha chain.